The sequence spans 232 residues: Large ribosomal subunit protein uL1 (232 aa).

This sequence belongs to the universal ribosomal protein uL1 family. In terms of assembly, part of the 50S ribosomal subunit.

Binds directly to 23S rRNA. The L1 stalk is quite mobile in the ribosome, and is involved in E site tRNA release. Functionally, protein L1 is also a translational repressor protein, it controls the translation of the L11 operon by binding to its mRNA. The protein is Large ribosomal subunit protein uL1 of Xylella fastidiosa (strain M23).